A 488-amino-acid polypeptide reads, in one-letter code: MAPAATASTGTKGIVRQVIGPVLDVEFPAGKLPKILNALRIEGKNPAGQDIGLTAEVQQLLGDHRVRAVAMSGTDGLVRGMEAVDTGAPISVPVGEATLGRIFNVLGEPVDEQGPIKSSTTSPIHRSAPKLTDLETKPKVFETGIKVIDLLAPYRQGGKVGLFGGAGVGKTVLIQELINNIAKEHGGVSVFGGVGERTREGNDLYEEFKESGVINADNLTESKVALCFGQMNEPPGARMRVGLSALTMAEHFRDVNKQDVLLFIDNIFRFVQAGSEVSALLGRMPSAVGYQPTLGTDVGELQERITSTLEGSITSIQAVYVPADDLTDPAPATTFAHLDATTVLARALAAKGIYPAVDPLDSTSTMLQPAVVGDEHYRTARAVQSTLQRYKELQDIIAILGLDELSEEDRKTFDRARKIEKFLSQPFFVAEIFTGMSGKYVKLEETIAGFNMILSGELDNLPEQAFYLVGNIEEVKAKAQKINSENKG.

164 to 171 (GGAGVGKT) is a binding site for ATP.

It belongs to the ATPase alpha/beta chains family. As to quaternary structure, F-type ATPases have 2 components, CF(1) - the catalytic core - and CF(0) - the membrane proton channel. CF(1) has five subunits: alpha(3), beta(3), gamma(1), delta(1), epsilon(1). CF(0) has four main subunits: a(1), b(1), b'(1) and c(9-12).

It localises to the cellular thylakoid membrane. The enzyme catalyses ATP + H2O + 4 H(+)(in) = ADP + phosphate + 5 H(+)(out). In terms of biological role, produces ATP from ADP in the presence of a proton gradient across the membrane. The catalytic sites are hosted primarily by the beta subunits. The protein is ATP synthase subunit beta of Prochlorococcus marinus (strain MIT 9211).